The primary structure comprises 1216 residues: Regulator of telomere elongation helicase 1 (1216 aa).

In terms of domain architecture, Helicase ATP-binding spans 7–295 (KGVTVDFPFQ…TKVAQQAELH (289 aa)). Residue 42–49 (SPTGTGKT) participates in ATP binding. Cys144, Cys162, Cys171, and Cys206 together coordinate [4Fe-4S] cluster. Residues 150–166 (KKQESNHMQVHLCRRKV) carry the Nuclear localization signal motif. A DEAH box motif is present at residues 249–252 (DEAH). The Nuclear localization signal motif lies at 874–880 (QRGRRRK). Disordered stretches follow at residues 978-1018 (GCSS…ATRQ) and 1140-1172 (GPGT…RKTQ). Residues 1172–1179 (QSKISSFL) carry the PIP-box motif.

This sequence belongs to the helicase family. RAD3/XPD subfamily. Interacts with TERF1. Interacts (via PIP-box) with PCNA; the interaction is direct and essential for suppressing telomere fragility. Interacts with MMS19; the interaction mediates the association of RTEL1 with the cytosolic iron-sulfur protein assembly (CIA) complex. In terms of tissue distribution, highly expressed in adult testis, liver and ovary.

It is found in the nucleus. It catalyses the reaction ATP + H2O = ADP + phosphate + H(+). Functionally, a probable ATP-dependent DNA helicase implicated in telomere-length regulation, DNA repair and the maintenance of genomic stability. Acts as an anti-recombinase to counteract toxic recombination and limit crossover during meiosis. Regulates meiotic recombination and crossover homeostasis by physically dissociating strand invasion events and thereby promotes noncrossover repair by meiotic synthesis dependent strand annealing (SDSA) as well as disassembly of D loop recombination intermediates. Also disassembles T loops and prevents telomere fragility by counteracting telomeric G4-DNA structures, which together ensure the dynamics and stability of the telomere. The sequence is that of Regulator of telomere elongation helicase 1 from Bos taurus (Bovine).